The following is an 802-amino-acid chain: Chromosome alignment-maintaining phosphoprotein 1 (802 aa).

An N-acetylmethionine modification is found at Met-1. The span at 88 to 105 shows a compositional bias: basic and acidic residues; that stretch reads SDKWSEQPKEQPSKDTES. Positions 88–475 are disordered; sequence SDKWSEQPKE…PDLWKSSFIM (388 aa). Ser-108 bears the Phosphoserine mark. A compositionally biased stretch (polar residues) spans 135 to 148; that stretch reads QKTSPSLCPESQAS. Positions 185–203 are enriched in basic and acidic residues; that stretch reads ERVDPPCELPELEKPERGP. Ser-204, Ser-207, Ser-234, Ser-237, Ser-243, Ser-252, Ser-254, Ser-265, Ser-272, Ser-276, Ser-298, Ser-309, Ser-334, Ser-345, and Ser-365 each carry phosphoserine. Residues 261-479 are mediates interaction with MAD2L2; the sequence is ARTASPEPRK…KSSFIMESQK (219 aa). The segment covering 332-351 has biased composition (pro residues); it reads PMSPGPWKPIPSVSPGPWKP. A compositionally biased stretch (low complexity) spans 354–368; the sequence is SMSTASWKSSVSSGS. Residues 369–378 are compositionally biased toward polar residues; that stretch reads WKTPPTSPES. Thr-371 is subject to Phosphothreonine. Residues Ser-375, Ser-394, Ser-405, Ser-416, Ser-421, Ser-425, Ser-432, Ser-434, and Ser-441 each carry the phosphoserine modification. A mediates localization to the spindle and the kinetochore and is required for the attachment of spindle microtubules to the kinetochore region spans residues 440 to 580; sequence VSPDQRKTSP…EIQLEAVDNA (141 aa). Phosphothreonine is present on Thr-447. Ser-448, Ser-451, and Ser-461 each carry phosphoserine. Lys-479 is subject to N6-acetyllysine; alternate. A Glycyl lysine isopeptide (Lys-Gly) (interchain with G-Cter in SUMO2); alternate cross-link involves residue Lys-479. A phosphoserine mark is found at Ser-497, Ser-502, and Ser-532. A Glycyl lysine isopeptide (Lys-Gly) (interchain with G-Cter in SUMO2) cross-link involves residue Lys-555. The interval 581–802 is mediates localization to the chromosome and the spindle and negatively regulates chromosome alignment; it reads KCDSLAQEGL…LESPLEEQQI (222 aa). Thr-593 bears the Phosphothreonine mark. Lys-596 participates in a covalent cross-link: Glycyl lysine isopeptide (Lys-Gly) (interchain with G-Cter in SUMO2). Phosphoserine occurs at positions 603, 605, 617, 622, 641, 642, and 643. Residues 603–625 are disordered; sequence SPSSKKLKKDSQENSDAELSSSE. A Glycyl lysine isopeptide (Lys-Gly) (interchain with G-Cter in SUMO2) cross-link involves residue Lys-660. Ser-665 is modified (phosphoserine). A Glycyl lysine isopeptide (Lys-Gly) (interchain with G-Cter in SUMO2) cross-link involves residue Lys-679. Position 726 is a phosphoserine (Ser-726). The C2H2-type zinc finger occupies 728–750; the sequence is YKCTICGKAFLLESLLKNHVAAH.

Interacts with MAD2L2. Interacts with POGZ, CBX1, CBX3 and CBX5. Post-translationally, phosphorylated by CDK1. Mitotic phosphorylation is required for the attachment of spindle microtubules to the kinetochore.

The protein localises to the nucleus. The protein resides in the chromosome. It localises to the centromere. It is found in the kinetochore. Its subcellular location is the cytoplasm. The protein localises to the cytoskeleton. The protein resides in the spindle. In terms of biological role, required for proper alignment of chromosomes at metaphase and their accurate segregation during mitosis. Involved in the maintenance of spindle microtubules attachment to the kinetochore during sister chromatid biorientation. May recruit CENPE and CENPF to the kinetochore. In Mus musculus (Mouse), this protein is Chromosome alignment-maintaining phosphoprotein 1 (Champ1).